The following is a 46-amino-acid chain: Escargot/snail protein homolog (46 aa).

3 C2H2-type zinc fingers span residues histidine 1–histidine 4, cysteine 9–histidine 30, and serine 36–alanine 46.

It belongs to the snail C2H2-type zinc-finger protein family.

The protein resides in the nucleus. The sequence is that of Escargot/snail protein homolog from Lithobius forficatus (Centipede).